The sequence spans 482 residues: NADH-quinone oxidoreductase subunit D (482 aa).

Residues 1 to 16 (MTTNTSTSSTTDDLTT) are compositionally biased toward low complexity. The segment at 1 to 48 (MTTNTSTSSTTDDLTTGAPNGTGAPDGANGVGGPTGTVGGPGEHPAYE) is disordered. Positions 29-42 (NGVGGPTGTVGGPG) are enriched in gly residues.

This sequence belongs to the complex I 49 kDa subunit family. In terms of assembly, NDH-1 is composed of 14 different subunits. Subunits NuoB, C, D, E, F, and G constitute the peripheral sector of the complex.

The protein localises to the cell membrane. It carries out the reaction a quinone + NADH + 5 H(+)(in) = a quinol + NAD(+) + 4 H(+)(out). Its function is as follows. NDH-1 shuttles electrons from NADH, via FMN and iron-sulfur (Fe-S) centers, to quinones in the respiratory chain. The immediate electron acceptor for the enzyme in this species is believed to be a menaquinone. Couples the redox reaction to proton translocation (for every two electrons transferred, four hydrogen ions are translocated across the cytoplasmic membrane), and thus conserves the redox energy in a proton gradient. This Frankia casuarinae (strain DSM 45818 / CECT 9043 / HFP020203 / CcI3) protein is NADH-quinone oxidoreductase subunit D.